We begin with the raw amino-acid sequence, 414 residues long: Glyceraldehyde-3-phosphate dehydrogenase, chloroplastic (414 aa).

A chloroplast-targeting transit peptide spans 1–76 (MAFVAPVATV…GIVAATFGPT (76 aa)). Residues 88–89 (RI), D112, and R156 contribute to the NADP(+) site. Residues 230 to 232 (SCT), T261, R276, 289 to 290 (TG), and R312 contribute to the D-glyceraldehyde 3-phosphate site. Residue C231 is the Nucleophile of the active site. N394 serves as a coordination point for NADP(+).

The protein belongs to the glyceraldehyde-3-phosphate dehydrogenase family. In terms of assembly, homotetramer.

Its subcellular location is the plastid. It localises to the chloroplast. It carries out the reaction D-glyceraldehyde 3-phosphate + phosphate + NADP(+) = (2R)-3-phospho-glyceroyl phosphate + NADPH + H(+). The protein operates within carbohydrate biosynthesis; Calvin cycle. This Chondrus crispus (Carrageen Irish moss) protein is Glyceraldehyde-3-phosphate dehydrogenase, chloroplastic (GAPA).